The sequence spans 395 residues: Ribosomal RNA large subunit methyltransferase G (395 aa).

The protein belongs to the methyltransferase superfamily. RlmG family.

It localises to the cytoplasm. It carries out the reaction guanosine(1835) in 23S rRNA + S-adenosyl-L-methionine = N(2)-methylguanosine(1835) in 23S rRNA + S-adenosyl-L-homocysteine + H(+). Specifically methylates the guanine in position 1835 (m2G1835) of 23S rRNA. This is Ribosomal RNA large subunit methyltransferase G from Yersinia pestis (strain Pestoides F).